The sequence spans 62 residues: Photosystem II reaction center protein Z (62 aa).

A run of 2 helical transmembrane segments spans residues 8 to 28 and 41 to 61; these read SVFA…VVLA and FSGA…NSFI.

The protein belongs to the PsbZ family. PSII is composed of 1 copy each of membrane proteins PsbA, PsbB, PsbC, PsbD, PsbE, PsbF, PsbH, PsbI, PsbJ, PsbK, PsbL, PsbM, PsbT, PsbY, PsbZ, Psb30/Ycf12, at least 3 peripheral proteins of the oxygen-evolving complex and a large number of cofactors. It forms dimeric complexes.

The protein localises to the plastid. Its subcellular location is the chloroplast thylakoid membrane. May control the interaction of photosystem II (PSII) cores with the light-harvesting antenna, regulates electron flow through the 2 photosystem reaction centers. PSII is a light-driven water plastoquinone oxidoreductase, using light energy to abstract electrons from H(2)O, generating a proton gradient subsequently used for ATP formation. This is Photosystem II reaction center protein Z from Staurastrum punctulatum (Green alga).